Consider the following 124-residue polypeptide: uncharacterized protein (124 aa).

The dksA C4-type; degenerate zinc finger occupies cysteine 73 to alanine 94.

This is an uncharacterized protein from Bacillus subtilis (strain 168).